Consider the following 189-residue polypeptide: Shikimate kinase (189 aa).

22–27 contributes to the ATP binding site; it reads ASGKST. Residue serine 26 coordinates Mg(2+). Positions 44, 68, and 90 each coordinate substrate. Arginine 128 serves as a coordination point for ATP. A substrate-binding site is contributed by arginine 147.

The protein belongs to the shikimate kinase family. Monomer. The cofactor is Mg(2+).

It localises to the cytoplasm. The enzyme catalyses shikimate + ATP = 3-phosphoshikimate + ADP + H(+). The protein operates within metabolic intermediate biosynthesis; chorismate biosynthesis; chorismate from D-erythrose 4-phosphate and phosphoenolpyruvate: step 5/7. In terms of biological role, catalyzes the specific phosphorylation of the 3-hydroxyl group of shikimic acid using ATP as a cosubstrate. This chain is Shikimate kinase, found in Synechococcus sp. (strain JA-3-3Ab) (Cyanobacteria bacterium Yellowstone A-Prime).